We begin with the raw amino-acid sequence, 207 residues long: dITP/XTP pyrophosphatase (207 aa).

Substrate is bound at residue 11 to 16 (TGNPGK). Asp-72 serves as the catalytic Proton acceptor. Asp-72 provides a ligand contact to Mg(2+). Substrate contacts are provided by residues Ser-73, 154 to 157 (FGYD), Lys-177, and 182 to 183 (HR).

The protein belongs to the HAM1 NTPase family. Homodimer. It depends on Mg(2+) as a cofactor.

The catalysed reaction is XTP + H2O = XMP + diphosphate + H(+). It catalyses the reaction dITP + H2O = dIMP + diphosphate + H(+). The enzyme catalyses ITP + H2O = IMP + diphosphate + H(+). In terms of biological role, pyrophosphatase that catalyzes the hydrolysis of nucleoside triphosphates to their monophosphate derivatives, with a high preference for the non-canonical purine nucleotides XTP (xanthosine triphosphate), dITP (deoxyinosine triphosphate) and ITP. Seems to function as a house-cleaning enzyme that removes non-canonical purine nucleotides from the nucleotide pool, thus preventing their incorporation into DNA/RNA and avoiding chromosomal lesions. The sequence is that of dITP/XTP pyrophosphatase from Thermus thermophilus (strain ATCC 27634 / DSM 579 / HB8).